A 393-amino-acid polypeptide reads, in one-letter code: Mitogen-activated protein kinase SIPK (393 aa).

Polar residues predominate over residues 1-11 (MDGSGQQTDTM). The tract at residues 1 to 31 (MDGSGQQTDTMMSDAGAEQPPPAPQPVAGMD) is disordered. The region spanning 60–345 (KPPILPIGKG…VEGALAHPYL (286 aa)) is the Protein kinase domain. ATP is bound by residues 66–74 (IGKGAYGIV) and Lys-89. Asp-186 acts as the Proton acceptor in catalysis. A TXY motif is present at residues 218 to 220 (TEY).

This sequence belongs to the protein kinase superfamily. CMGC Ser/Thr protein kinase family. MAP kinase subfamily. Interacts with SIPKK.

It catalyses the reaction L-tyrosyl-[protein] + ATP = O-phospho-L-tyrosyl-[protein] + ADP + H(+). The catalysed reaction is L-seryl-[protein] + ATP = O-phospho-L-seryl-[protein] + ADP + H(+). It carries out the reaction L-threonyl-[protein] + ATP = O-phospho-L-threonyl-[protein] + ADP + H(+). With respect to regulation, activated by threonine and tyrosine phosphorylation. Its function is as follows. Phosphorylates myelin basic protein (MBP) in vitro. May be involved in disease resistance. In Nicotiana tabacum (Common tobacco), this protein is Mitogen-activated protein kinase SIPK.